Reading from the N-terminus, the 540-residue chain is Hexose transporter HXT14 (540 aa).

The Cytoplasmic segment spans residues 1–56; sequence MTAQIPYQHSSGYISHFHNNELDAGRGRDYNVTIKYLDDKEENIEGQAAKISHNAS. The chain crosses the membrane as a helical span at residues 57-76; sequence LHIPVLLCLVISLGGFIFGW. Residues 77-119 lie on the Extracellular side of the membrane; that stretch reads DIGTIGGMTNMVSFQEKFGTTNIIHDDETIFVSTKKLTDLQIG. A helical transmembrane segment spans residues 120-140; sequence LIISIFNISCGVGALTLSKIG. Over 141-146 the chain is Cytoplasmic; sequence DWIGRK. A helical transmembrane segment spans residues 147 to 167; that stretch reads GGIWFALVVYCIGITIQILSY. Residues 168-177 lie on the Extracellular side of the membrane; that stretch reads GRWYFLTLGR. The helical transmembrane segment at 178–198 threads the bilayer; the sequence is AVTGIGVGVTTVLVPMFLSEN. Topologically, residues 199 to 204 are cytoplasmic; sequence SPLKIR. A helical transmembrane segment spans residues 205 to 225; that stretch reads GSMVSTYQLIVTFGILMGNIL. The Extracellular segment spans residues 226–243; it reads NFICERCYKDPTQNIAWQ. Residues 244-264 traverse the membrane as a helical segment; the sequence is LPLFLGYIWAIIIGMSLVYVP. Residues 265 to 357 lie on the Cytoplasmic side of the membrane; sequence ESPQYLAKIK…IMAFQQLSGI (93 aa). The helical transmembrane segment at 358–374 threads the bilayer; it reads NYFFYYGTSVFKGVGIK. The Extracellular segment spans residues 375–380; the sequence is DPYITS. A helical membrane pass occupies residues 381-398; sequence IILSSVNFLSTILGIYYV. Residues 399 to 405 are Cytoplasmic-facing; it reads EKWGHKT. A helical membrane pass occupies residues 406 to 426; sequence CLLYGSTNLLFYMMTYATVGT. Residues 427–440 lie on the Extracellular side of the membrane; that stretch reads FGRETDFSNIVLII. The chain crosses the membrane as a helical span at residues 441–461; the sequence is VTCCFIFWFAITLGPVTFVLV. Over 462-478 the chain is Cytoplasmic; that stretch reads SELFPLRTRAISMAICT. The chain crosses the membrane as a helical span at residues 479–499; that stretch reads FINWMFNFLISLLTPMIVSKI. A topological domain (extracellular) is located at residue Asp-500. The chain crosses the membrane as a helical span at residues 501-521; the sequence is FKLGYIFAACLLALIIFSWIL. Residues 522–540 are Cytoplasmic-facing; the sequence is VPETRKKNEQEINKIFEPE.

The protein belongs to the major facilitator superfamily. Sugar transporter (TC 2.A.1.1) family.

Its subcellular location is the membrane. Its function is as follows. Probable glucose transporter. This Saccharomyces cerevisiae (strain ATCC 204508 / S288c) (Baker's yeast) protein is Hexose transporter HXT14 (HXT14).